A 271-amino-acid polypeptide reads, in one-letter code: MATH domain and coiled-coil domain-containing protein At3g27040 (271 aa).

Residues 7–133 form the MATH domain; sequence DKKFTWVIKN…NGEVKIVAEV (127 aa). Residues 230-271 are a coiled coil; sequence KLDWLEKKLKETGKSRLQEIEEDLKDLKVKCADMDALLDFLR.

In Arabidopsis thaliana (Mouse-ear cress), this protein is MATH domain and coiled-coil domain-containing protein At3g27040.